The chain runs to 783 residues: DNA repair and recombination protein RAD54-like (783 aa).

The tract at residues 2 to 9 (RRSLAPSQ) is required for chromatin remodeling, strand pairing activities and coupling of ATPase activity. Thr-22 bears the Phosphothreonine mark. A Helicase ATP-binding domain is found at 165–340 (EGKRGNFNGC…FSLVNFVNPE (176 aa)). 178–185 (DEMGLGKT) contributes to the ATP binding site. Residues 291-294 (DEGH) carry the DEGH box motif. One can recognise a Helicase C-terminal domain in the interval 497–654 (LLDFMLAAIR…NNESSEKHFT (158 aa)). The segment at 737–783 (AESKPAAITEDDESEQQQQSPKRTSKNDDNDEDFDPENSAEEQFLGF) is disordered. Positions 765–776 (DNDEDFDPENSA) are enriched in acidic residues.

It belongs to the SNF2/RAD54 helicase family. In terms of assembly, interacts (via N-terminus) with spn-A/Rad51.

The protein localises to the nucleus. Functionally, involved in mitotic DNA repair and meiotic recombination. Functions in the recombinational DNA repair pathway. Essential for interhomolog gene conversion (GC), but may have a less important role in intersister GC than spn-A/Rad51. In the presence of DNA, spn-A/Rad51 enhances the ATPase activity of okr/Rad54. This is DNA repair and recombination protein RAD54-like from Drosophila mojavensis (Fruit fly).